A 746-amino-acid chain; its full sequence is Polyphosphate kinase (746 aa).

Residues 1–17 show a composition bias toward polar residues; sequence MRQPNTQAEAQHTQPSV. The disordered stretch occupies residues 1-60; sequence MRQPNTQAEAQHTQPSVGSIAAHRPNTVAATVSGLEPDIDADLDAYEESEESQDGGARLP. Positions 37–53 are enriched in acidic residues; that stretch reads PDIDADLDAYEESEESQ. Asn102 serves as a coordination point for ATP. Positions 429 and 459 each coordinate Mg(2+). The active-site Phosphohistidine intermediate is His489. ATP-binding residues include Tyr522, Arg618, and His646.

Belongs to the polyphosphate kinase 1 (PPK1) family. The cofactor is Mg(2+). In terms of processing, an intermediate of this reaction is the autophosphorylated ppk in which a phosphate is covalently linked to a histidine residue through a N-P bond.

The catalysed reaction is [phosphate](n) + ATP = [phosphate](n+1) + ADP. Functionally, catalyzes the reversible transfer of the terminal phosphate of ATP to form a long-chain polyphosphate (polyP). This chain is Polyphosphate kinase, found in Streptomyces coelicolor (strain ATCC BAA-471 / A3(2) / M145).